Here is a 340-residue protein sequence, read N- to C-terminus: Lipoate--protein ligase 2 (340 aa).

Residues 31–222 form the BPL/LPL catalytic domain; the sequence is FLDEDILFPY…QILGIDDIKE (192 aa). Residues R73, 78–81, K136, and A140 each bind ATP; that span reads GAVY. K136 is a binding site for (R)-lipoate. Positions 293–321 form a coiled coil; sequence QGDIKDVEEALQGTKMTREDLMHQLKQLD.

It belongs to the LplA family.

The catalysed reaction is L-lysyl-[lipoyl-carrier protein] + (R)-lipoate + ATP = N(6)-[(R)-lipoyl]-L-lysyl-[lipoyl-carrier protein] + AMP + diphosphate + H(+). It participates in protein modification; protein lipoylation via exogenous pathway; protein N(6)-(lipoyl)lysine from lipoate: step 1/2. Its pathway is protein modification; protein lipoylation via exogenous pathway; protein N(6)-(lipoyl)lysine from lipoate: step 2/2. In terms of biological role, catalyzes specifically the lipoylation of GcvH-L (SAV0324), likely via the ATP-dependent activation of lipoate to lipoyl-AMP and the transfer of the activated lipoyl onto the lipoyl domain of the target protein. Can also utilize lipoamide as substrate for GcvH-L modification. The polypeptide is Lipoate--protein ligase 2 (Staphylococcus aureus (strain Mu50 / ATCC 700699)).